A 132-amino-acid chain; its full sequence is Small ribosomal subunit protein uS8 (132 aa).

The protein belongs to the universal ribosomal protein uS8 family. Part of the 30S ribosomal subunit. Contacts proteins S5 and S12.

One of the primary rRNA binding proteins, it binds directly to 16S rRNA central domain where it helps coordinate assembly of the platform of the 30S subunit. The polypeptide is Small ribosomal subunit protein uS8 (Rickettsia rickettsii (strain Sheila Smith)).